Consider the following 749-residue polypeptide: Protein SEY1 homolog 2 (749 aa).

The Cytoplasmic segment spans residues 1–671; sequence MIKNYGDRYH…QKHKQDFLQN (671 aa). The region spanning 40–265 is the GB1/RHD3-type G domain; sequence GKNYNIVSII…YEKNVRWSDM (226 aa). 50-57 provides a ligand contact to GTP; it reads GSQSTGKS. Residues 445–465 are a coiled coil; that stretch reads NQLKAFVEAQLATFKQQLDNI. Residues 672–692 traverse the membrane as a helical segment; that stretch reads IPKPFWFLLLFFMYDDVLRWM. Topologically, residues 693–695 are lumenal; it reads GNP. Residues 696-716 traverse the membrane as a helical segment; that stretch reads LFLYPILIILCFVGFCIAIGL. Residues 717-749 are Cytoplasmic-facing; the sequence is HSLPKLAFQWVFRTLNQAVIPIIFGGISKLKGS.

This sequence belongs to the TRAFAC class dynamin-like GTPase superfamily. GB1/RHD3 GTPase family. RHD3 subfamily.

The protein localises to the endoplasmic reticulum membrane. Probable GTP-binding protein that may be involved in cell development. This Paramecium tetraurelia protein is Protein SEY1 homolog 2.